The following is a 366-amino-acid chain: Fructose-bisphosphate aldolase 2 (366 aa).

The substrate site is built by R60 and K150. E191 (proton acceptor) is an active-site residue. The active-site Schiff-base intermediate with dihydroxyacetone-P is the K233.

It belongs to the class I fructose-bisphosphate aldolase family.

The enzyme catalyses beta-D-fructose 1,6-bisphosphate = D-glyceraldehyde 3-phosphate + dihydroxyacetone phosphate. The protein operates within carbohydrate degradation; glycolysis; D-glyceraldehyde 3-phosphate and glycerone phosphate from D-glucose: step 4/4. The polypeptide is Fructose-bisphosphate aldolase 2 (aldo-2) (Caenorhabditis elegans).